A 173-amino-acid polypeptide reads, in one-letter code: MVLLAAKGLSLLDVNPGLVVWTLVTFLVVVLVLKKFAWDVILKALDERAETVQNDIKKASELRLEAEALLKDYEARLNSAKDEANAIVAEAKSDALKLKNKLLEETNGEVKAQKDQAVKEIELAKAKALGQLQAQIVEMTITVAAKVLEKQLKSEDYKAFIETELDKLGKLSA.

The helical transmembrane segment at 12 to 32 (LDVNPGLVVWTLVTFLVVVLV) threads the bilayer.

It belongs to the ATPase B chain family. As to quaternary structure, F-type ATPases have 2 components, F(1) - the catalytic core - and F(0) - the membrane proton channel. F(1) has five subunits: alpha(3), beta(3), gamma(1), delta(1), epsilon(1). F(0) has three main subunits: a(1), b(2) and c(10-14). The alpha and beta chains form an alternating ring which encloses part of the gamma chain. F(1) is attached to F(0) by a central stalk formed by the gamma and epsilon chains, while a peripheral stalk is formed by the delta and b chains.

It localises to the cell inner membrane. Functionally, f(1)F(0) ATP synthase produces ATP from ADP in the presence of a proton or sodium gradient. F-type ATPases consist of two structural domains, F(1) containing the extramembraneous catalytic core and F(0) containing the membrane proton channel, linked together by a central stalk and a peripheral stalk. During catalysis, ATP synthesis in the catalytic domain of F(1) is coupled via a rotary mechanism of the central stalk subunits to proton translocation. Its function is as follows. Component of the F(0) channel, it forms part of the peripheral stalk, linking F(1) to F(0). This Leptospira interrogans serogroup Icterohaemorrhagiae serovar copenhageni (strain Fiocruz L1-130) protein is ATP synthase subunit b.